Reading from the N-terminus, the 153-residue chain is Arachidonate 5-lipoxygenase-activating protein (153 aa).

At 1 to 8 the chain is on the lumenal side; it reads MDQETVGN. Residues 9-30 form a helical membrane-spanning segment; that stretch reads VVLLAIVTLISVIQNGFFAHKV. Residues 31–52 are Cytoplasmic-facing; the sequence is EHESKTQNGRSFQRTGTLAFER. A helical transmembrane segment spans residues 53-77; the sequence is VYTANQNCVDAYPTFLVMLWSAGLL. Residues 78 to 80 lie on the Lumenal side of the membrane; that stretch reads CSQ. The chain crosses the membrane as a helical span at residues 81-102; sequence VPAAFAGLMYLFVRQKYFVGYL. The Cytoplasmic portion of the chain corresponds to 103-107; sequence GERRQ. The stretch at 108–115 is an intramembrane region; that stretch reads STPGYIFG. Residues 116-128 traverse the membrane as a helical segment; that stretch reads KRIILFLFLMSLA. At 129–153 the chain is on the lumenal side; sequence GIFNYYLILFFGSDFENYIKTITTT.

Belongs to the MAPEG family. In terms of assembly, homotrimer. Interacts with LTC4S and ALOX5.

The protein resides in the nucleus membrane. It is found in the endoplasmic reticulum membrane. Required for leukotriene biosynthesis by ALOX5 (5-lipoxygenase). Anchors ALOX5 to the membrane. Binds arachidonic acid, and could play an essential role in the transfer of arachidonic acid to ALOX5. Binds to MK-886, a compound that blocks the biosynthesis of leukotrienes. This chain is Arachidonate 5-lipoxygenase-activating protein (ALOX5AP), found in Equus caballus (Horse).